The chain runs to 385 residues: Protein-glutamate methylesterase/protein-glutamine glutaminase (385 aa).

Aspartate 53 is modified (4-aspartylphosphate). The region spanning lysine 196–serine 385 is the CheB-type methylesterase domain. Active-site residues include serine 208, histidine 234, and aspartate 330.

This sequence belongs to the CheB family. Phosphorylated by CheA. Phosphorylation of the N-terminal regulatory domain activates the methylesterase activity.

The protein localises to the cytoplasm. The enzyme catalyses [protein]-L-glutamate 5-O-methyl ester + H2O = L-glutamyl-[protein] + methanol + H(+). The catalysed reaction is L-glutaminyl-[protein] + H2O = L-glutamyl-[protein] + NH4(+). Involved in chemotaxis. Part of a chemotaxis signal transduction system that modulates chemotaxis in response to various stimuli. Catalyzes the demethylation of specific methylglutamate residues introduced into the chemoreceptors (methyl-accepting chemotaxis proteins or MCP) by CheR. Also mediates the irreversible deamidation of specific glutamine residues to glutamic acid. This Borreliella burgdorferi (strain ATCC 35210 / DSM 4680 / CIP 102532 / B31) (Borrelia burgdorferi) protein is Protein-glutamate methylesterase/protein-glutamine glutaminase.